Reading from the N-terminus, the 89-residue chain is Huwentoxin-IV (89 aa).

Positions 1–24 (MVNMKASMFLALAGLVLLFVVCYA) are cleaved as a signal peptide. Positions 25–52 (SESEEKEFSNELLSSVLAVDDNSKGEER) are excised as a propeptide. Pyrrolidone carboxylic acid (Glu); partial is present on Glu-53. Cystine bridges form between Cys-54–Cys-69, Cys-61–Cys-76, and Cys-68–Cys-83. Ile-87 carries the isoleucine amide modification.

It belongs to the neurotoxin 10 (Hwtx-1) family. 22 (Htx-4) subfamily. Post-translationally, two forms of huwentoxin-IV exist in the venom of H.schmidti, a non-N-terminally modified (HwTx-IV) and a naturally modified peptide with pyroglutamic acid residue at position 53 (mHwTx-IV). mHwTx-IV shows no observable difference with the unmodified toxin when applied to the TTX-S sodium channel of DRG neuron (IC(50)~50 nM) or when tested on hNav1.7/SCN9A (IC(50)=30.8 nM). In addition, similarly to the unmodified toxin, mHwTx-IV has only a weak affinity for lipid membranes. However, in contrast with HwTx-IV, which dissociates at moderate and high depolarization voltages (50-200 mV), mHwTx-IV inhibition of TTX-sensitive sodium channels is not reversed by strong depolarization voltages. In terms of tissue distribution, expressed by the venom gland.

It is found in the secreted. In terms of biological role, this lethal neurotoxin (without cyclization at position 53) inhibits neuronal voltage-gated sodium channel Nav1.2/SCN2A (IC(50)=10-150 nM), rNav1.3/SCN3A (IC(50)=338 nM), Nav1.6/SCN8A (IC(50)=117 nM), and hNav1.7/SCN9A (IC(50)=9.6-33 nM). It inhibits activation of sodium channel by trapping the voltage sensor of domain II (DIIS4) in the closed configuration. The toxin neither shifts the Nav1.7/SCN9A activation curve nor modifies the slope factor. It does not slow fast-inactivation of hNav1.7/SCN9A channels. In addition, it has only a weak affinity for lipid membranes. This toxin also exists with a pyroglutamate at position 53. The sole difference observed between modified (mHwTx-IV) and unmodified toxins is that moderate or high depolarization voltages (200 mV) permit the unmodified toxin to dissociate, whereas mHwTx-IV toxin does not dissociate, even at high depolarization voltages. These data indicate that mHwTx-IV strongly binds to voltage sensor of sodium channel even at extreme depolarization voltages. The chain is Huwentoxin-IV from Cyriopagopus schmidti (Chinese bird spider).